The following is a 327-amino-acid chain: Methionyl-tRNA formyltransferase (327 aa).

Residue 111–114 (SLLP) coordinates (6S)-5,6,7,8-tetrahydrofolate.

Belongs to the Fmt family.

The enzyme catalyses L-methionyl-tRNA(fMet) + (6R)-10-formyltetrahydrofolate = N-formyl-L-methionyl-tRNA(fMet) + (6S)-5,6,7,8-tetrahydrofolate + H(+). Functionally, attaches a formyl group to the free amino group of methionyl-tRNA(fMet). The formyl group appears to play a dual role in the initiator identity of N-formylmethionyl-tRNA by promoting its recognition by IF2 and preventing the misappropriation of this tRNA by the elongation apparatus. This Synechococcus elongatus (strain ATCC 33912 / PCC 7942 / FACHB-805) (Anacystis nidulans R2) protein is Methionyl-tRNA formyltransferase.